The following is a 392-amino-acid chain: L-rhamnonate dehydratase (392 aa).

Substrate contacts are provided by histidine 22 and arginine 48. Mg(2+) contacts are provided by aspartate 214, glutamate 240, and glutamate 268. Residue histidine 318 is the Proton acceptor of the active site. A substrate-binding site is contributed by glutamate 338.

It belongs to the mandelate racemase/muconate lactonizing enzyme family. RhamD subfamily. In terms of assembly, homooctamer; tetramer of dimers. It depends on Mg(2+) as a cofactor.

The catalysed reaction is L-rhamnonate = 2-dehydro-3-deoxy-L-rhamnonate + H2O. Its function is as follows. Catalyzes the dehydration of L-rhamnonate to 2-keto-3-deoxy-L-rhamnonate (KDR). This chain is L-rhamnonate dehydratase, found in Burkholderia orbicola (strain MC0-3).